The chain runs to 317 residues: MKHYSVLKNEMIQALDCLKEDSILIDCTLGFGGHTIGALQAYPNIEVYAFDKDIYALNLAKERLKPYLQNIHFCHNAFSQFLDIVPNVVLPRVRGIIADIGVSSMQLDETQRGFSFVSSTLDMRMDTRADLNATKVINTYSPIRLEEIFRIYGEVRQSKKLAEIIAYERKKKPFSSCLELSTLIEQHFPRVGGIHPATLAFQALRIEVNDELGELKRLLHNIELAFDEGKIASCRVGIISFHSLEDRIIKQCFKQWSKSCICAEESLRCECGNNHAKGQILTKKPIIPTPQEIAQNKRSRSAKLRIFELKSSKDKGV.

S-adenosyl-L-methionine-binding positions include 32–34, Asp51, Phe78, Asp99, and Gln106; that span reads GGH.

This sequence belongs to the methyltransferase superfamily. RsmH family.

It localises to the cytoplasm. The enzyme catalyses cytidine(1402) in 16S rRNA + S-adenosyl-L-methionine = N(4)-methylcytidine(1402) in 16S rRNA + S-adenosyl-L-homocysteine + H(+). In terms of biological role, specifically methylates the N4 position of cytidine in position 1402 (C1402) of 16S rRNA. In Helicobacter hepaticus (strain ATCC 51449 / 3B1), this protein is Ribosomal RNA small subunit methyltransferase H.